A 561-amino-acid chain; its full sequence is Tetracenomycin A2 monooxygenase-dioxygenase (561 aa).

Leucine 15, glutamate 35, glutamine 128, and methionine 152 together coordinate FAD. The Proton acceptor role is filled by tyrosine 231. Aspartate 322 contributes to the FAD binding site.

The protein belongs to the PheA/TfdB FAD monooxygenase family. Monomer. May form oligomers up to homohexamers. FAD is required as a cofactor.

The enzyme catalyses tetracenomycin A2 + 2 NADPH + 2 O2 + 2 H(+) = tetracenomycin C + 2 NADP(+) + H2O. Its pathway is antibiotic biosynthesis; tetracenomycin C biosynthesis. In terms of biological role, involved in the biosynthesis of tetracenomycin C (TCM C). Catalyzes the triple hydroxylation of tetracenomycin A2 (TCM A2) at positions C-4, C-4a and C-12a to give tetracenomycin C (TCM C). Can use either NADH or NADPH as electron donors, but prefers NADPH under physiological conditions. In Streptomyces glaucescens, this protein is Tetracenomycin A2 monooxygenase-dioxygenase.